Here is a 536-residue protein sequence, read N- to C-terminus: Cytochrome P450 78A7 (536 aa).

A helical transmembrane segment spans residues 36-56 (LFLAVVFLSIVTWALAGGGGV). Residue C481 coordinates heme.

Belongs to the cytochrome P450 family. Heme serves as cofactor.

Its subcellular location is the membrane. Functionally, functions probably in association with CYP78A5 in regulating relative growth of the shoot apical meristem and plant organs via a non-cell-autonomous signal. The chain is Cytochrome P450 78A7 (CYP78A7) from Arabidopsis thaliana (Mouse-ear cress).